A 242-amino-acid chain; its full sequence is MSGRKPGTTGDTIVNLGLTAAILLCWLVLHAFTLWLLDAAAHPLLAVLCLAGLTWLSVGLFIIAHDAMHGSVVPGRPRANAAIGQLALWLYAGFSWPKLIAKHMTHHRHAGTDNDPDFGHGGPVRWYGSFVSTYFGWREGLLLPVIVTTYALILGDRWMYVIFWPVPAVLASIQIFVFGTWLPHRPGHDDFPDRHNARSTGIGDPLSLLTCFHFGGYHHEHHLHPHVPWWRLPRTRKTGGRA.

It carries out the reaction all-trans-beta-carotene + 2 AH2 + 2 O2 = echinenone + 2 A + 3 H2O. It catalyses the reaction echinenone + 2 AH2 + 2 O2 = canthaxanthin + 2 A + 3 H2O. It participates in carotenoid biosynthesis; astaxanthin biosynthesis. Converts beta-carotene to canthaxanthin via echinenone. The protein is Beta-carotene ketolase of Paracoccus sp. (strain PC1) (Alcaligenes sp. (strain PC1)).